A 272-amino-acid polypeptide reads, in one-letter code: MLNAEHLHVARDSGVILRDLSIRIAPGCVTALLGRNGAGKSTLLGALAGDLPAGGRTRGATVRGDVALNGEPLRAIDATRLARLRAVLPQASRPAFAFSARDIVLLGRYPHARRAGALAREDGEIASRALALAGASTLDARDVTTLSGGELARVQFARVLAQLWPSEDAARAPRYLLLDEPTAALDLAHQHQLLDTVRRLSRDWNIGVLTIVHDPNLAARHADRIAMLADGEILADGAPADVLRPDLIERCYGFRVRLVDAGDDVAPVIVPA.

One can recognise an ABC transporter domain in the interval 2–255; sequence LNAEHLHVAR…DLIERCYGFR (254 aa). 34 to 41 provides a ligand contact to ATP; the sequence is GRNGAGKS.

This sequence belongs to the ABC transporter superfamily. Heme (hemin) importer (TC 3.A.1.14.5) family. In terms of assembly, the complex is composed of two ATP-binding proteins (HmuV), two transmembrane proteins (HmuU) and a solute-binding protein (HmuT).

The protein localises to the cell inner membrane. Functionally, part of the ABC transporter complex HmuTUV involved in hemin import. Responsible for energy coupling to the transport system. This Burkholderia thailandensis (strain ATCC 700388 / DSM 13276 / CCUG 48851 / CIP 106301 / E264) protein is Hemin import ATP-binding protein HmuV.